A 435-amino-acid chain; its full sequence is Cyclin-dependent kinase 15 (435 aa).

The Protein kinase domain maps to 103–387 (YLNLEKLGEG…AQEALVHDYF (285 aa)). Residues 109 to 117 (LGEGSYATV) and K132 each bind ATP. D224 acts as the Proton acceptor in catalysis.

This sequence belongs to the protein kinase superfamily. CMGC Ser/Thr protein kinase family. CDC2/CDKX subfamily. Mg(2+) serves as cofactor.

It carries out the reaction L-seryl-[protein] + ATP = O-phospho-L-seryl-[protein] + ADP + H(+). The catalysed reaction is L-threonyl-[protein] + ATP = O-phospho-L-threonyl-[protein] + ADP + H(+). Functionally, serine/threonine-protein kinase that acts like an antiapoptotic protein that counters TRAIL/TNFSF10-induced apoptosis by inducing phosphorylation of BIRC5 at 'Thr-34'. The sequence is that of Cyclin-dependent kinase 15 (CDK15) from Homo sapiens (Human).